Consider the following 238-residue polypeptide: Dof zinc finger protein MNB1A (238 aa).

Positions 1–13 (MQEASSAAAAGAE) are enriched in low complexity. A disordered region spans residues 1–48 (MQEASSAAAAGAEPGRRAAQHQFAGVDLRRPKGYAAPAPAPAVGEGDP). The Dof-type zinc finger occupies 47–101 (DPCPRCASRDTKFCYYNNYNTSQPRHFCKGCRRYWTKGGTLRNVPVGGGTRKKPS). The Zn(2+) site is built by Cys49, Cys52, Cys74, and Cys77. The segment at 85-155 (GTLRNVPVGG…TATTTTTTSE (71 aa)) is disordered. Basic residues predominate over residues 119–130 (PKKKPASKKRRV). The segment covering 138–155 (ATAADPGKTATTTTTTSE) has biased composition (low complexity).

As to expression, expressed in all tissues examined.

It localises to the nucleus. Transcription factor that binds specifically to a 5'-AA[AG]G-3' consensus core sequence at the MNF1-binding site. The sequence is that of Dof zinc finger protein MNB1A (MNB1A) from Zea mays (Maize).